We begin with the raw amino-acid sequence, 146 residues long: Leghemoglobin (146 aa).

The Globin domain occupies 3 to 146 (AFTEKQEALV…FAAGIKKAYA (144 aa)). Nitrated tyrosine occurs at positions 26 and 31. Ser-46 contributes to the heme b binding site. Ser-46 is modified (phosphoserine). Residue His-62 participates in O2 binding. Positions 93 and 96 each coordinate heme b. Position 134 is a nitrated tyrosine (Tyr-134).

It belongs to the plant globin family. In terms of assembly, monomer. In terms of processing, nitrated mainly at Tyr-31 and, to a lower extent, at Tyr-26 and Tyr-134, in effective nodules and particularly in hypoxic conditions; this mechanism may play a protective role in the symbiosis by buffering toxic peroxynitrite NO(2)(-). Nitration level decrease during nodule senescence. Phosphorylation at Ser-46 disrupts the molecular environment of its porphyrin ring oxygen binding pocket, thus leading to a reduced oxygen consumption and to the delivery of oxygen O(2) to symbiosomes. As to expression, root nodules.

It is found in the cytoplasm. The protein resides in the cytosol. Its subcellular location is the nucleus. In terms of biological role, leghemoglobin that reversibly binds oxygen O(2) through a pentacoordinated heme iron. In root nodules, facilitates the diffusion of oxygen to the bacteroids while preventing the bacterial nitrogenase from being inactivated by buffering dioxygen, nitric oxide and carbon monoxide, and promoting the formation of reactive oxygen species (ROS, e.g. H(2)O(2)). This role is essential for symbiotic nitrogen fixation (SNF). This Phaseolus vulgaris (Kidney bean) protein is Leghemoglobin.